We begin with the raw amino-acid sequence, 451 residues long: Chromosomal replication initiator protein DnaA (451 aa).

The segment at Met1–Glu93 is domain I, interacts with DnaA modulators. The segment at Glu88–Ser108 is disordered. A domain II region spans residues Gln94–Thr113. The interval Met114–Ser330 is domain III, AAA+ region. Gly158, Gly160, Lys161, and Thr162 together coordinate ATP. The domain IV, binds dsDNA stretch occupies residues Ser331 to Gln451.

Belongs to the DnaA family. Oligomerizes as a right-handed, spiral filament on DNA at oriC.

Its subcellular location is the cytoplasm. In terms of biological role, plays an essential role in the initiation and regulation of chromosomal replication. ATP-DnaA binds to the origin of replication (oriC) to initiate formation of the DNA replication initiation complex once per cell cycle. Binds the DnaA box (a 9 base pair repeat at the origin) and separates the double-stranded (ds)DNA. Forms a right-handed helical filament on oriC DNA; dsDNA binds to the exterior of the filament while single-stranded (ss)DNA is stabiized in the filament's interior. The ATP-DnaA-oriC complex binds and stabilizes one strand of the AT-rich DNA unwinding element (DUE), permitting loading of DNA polymerase. After initiation quickly degrades to an ADP-DnaA complex that is not apt for DNA replication. Binds acidic phospholipids. This is Chromosomal replication initiator protein DnaA from Shouchella clausii (strain KSM-K16) (Alkalihalobacillus clausii).